We begin with the raw amino-acid sequence, 688 residues long: Translation initiation factor IF-2 (688 aa).

Positions 62–103 (EFEVEEKVVRSKKNSNKKKKKGKGNEDKRQDNFAGRQQTQIV) are disordered. Basic residues predominate over residues 71–83 (RSKKNSNKKKKKG). Residues 190–359 (ERPAVVTIMG…LLVSEVEEYK (170 aa)) form the tr-type G domain. The interval 199–206 (GHVDHGKT) is G1. 199 to 206 (GHVDHGKT) provides a ligand contact to GTP. Positions 224–228 (GITQH) are G2. Residues 245-248 (DTPG) are G3. Residues 245–249 (DTPGH) and 299–302 (NKMD) contribute to the GTP site. The interval 299–302 (NKMD) is G4. The segment at 335–337 (SAI) is G5.

The protein belongs to the TRAFAC class translation factor GTPase superfamily. Classic translation factor GTPase family. IF-2 subfamily.

It localises to the cytoplasm. In terms of biological role, one of the essential components for the initiation of protein synthesis. Protects formylmethionyl-tRNA from spontaneous hydrolysis and promotes its binding to the 30S ribosomal subunits. Also involved in the hydrolysis of GTP during the formation of the 70S ribosomal complex. This chain is Translation initiation factor IF-2, found in Bacillus cereus (strain G9842).